Here is a 344-residue protein sequence, read N- to C-terminus: UDP-galactose/UDP-glucose transporter 5B (344 aa).

A run of 8 helical transmembrane segments spans residues 16-36 (LWKG…YGVL), 56-76 (LFLV…ALLA), 115-135 (VQTL…TLIM), 142-162 (FDYL…LFPA), 176-196 (TVWG…TSTF), 220-240 (CVLS…VDFV), 246-266 (CLLD…FISY), and 292-312 (CIWF…IVFG). Residues 324-344 (KNSQTQPPPPELPQYEKVESS) are disordered.

Belongs to the nucleotide-sugar transporter family. UDP-galactose:UMP antiporter (TC 2.A.7.11) subfamily.

Its subcellular location is the membrane. Sugar transporter involved in the transport of nucleotide-sugars from cytoplasm into the Golgi and/or the endoplasmic reticulum. The protein is UDP-galactose/UDP-glucose transporter 5B of Arabidopsis thaliana (Mouse-ear cress).